Here is a 56-residue protein sequence, read N- to C-terminus: Envelope protein H3 (56 aa).

It belongs to the orthopoxvirus OPG108 family. In terms of processing, does not contain disulfide bonds.

The protein resides in the virion membrane. Envelope protein that binds to heparan sulfate on the cell surface and might provide virion attachment to target cell. This Vaccinia virus (strain L-IVP) (VACV) protein is Envelope protein H3 (OPG108).